The sequence spans 309 residues: Ankyrin repeat and SOCS box protein 12 (309 aa).

5 ANK repeats span residues 63–92 (VPGTPLRLAASYGHLSCLQVLLAHGADVDS), 96–125 (KAQTPLFTAVSHGHLDCVRVLLEAGASPGG), 129–158 (NNCSPVLTAARDGAVAILQELLDHGAEANV), 171–200 (SCSGPLYLAAVYGHLDCFRLLLLHGADPDY), and 213–243 (RPRTLLEICLHHNCEPEYIQLLIDFGANIYL). The region spanning 268–308 (PRSLLSQVRLVVRRALCQAGQPQAINQLDIPPMLISYLKHQ) is the SOCS box domain.

The protein belongs to the ankyrin SOCS box (ASB) family. As to quaternary structure, interacts with CUL5 and RNF7.

The protein operates within protein modification; protein ubiquitination. Probable substrate-recognition component of a SCF-like ECS (Elongin-Cullin-SOCS-box protein) E3 ubiquitin-protein ligase complex which mediates the ubiquitination and subsequent proteasomal degradation of target proteins. This chain is Ankyrin repeat and SOCS box protein 12 (ASB12), found in Homo sapiens (Human).